A 479-amino-acid chain; its full sequence is Ribulose bisphosphate carboxylase large chain (479 aa).

A propeptide spanning residues 1–2 (MS) is cleaved from the precursor. Asn-123 and Thr-173 together coordinate substrate. The Proton acceptor role is filled by Lys-175. Lys-177 provides a ligand contact to substrate. Mg(2+) contacts are provided by Lys-201, Asp-203, and Glu-204. Residue Lys-201 is modified to N6-carboxylysine. At Ser-208 the chain carries Phosphoserine. Catalysis depends on His-294, which acts as the Proton acceptor. The substrate site is built by Arg-295 and His-327. Thr-330 is subject to Phosphothreonine. Ser-379 provides a ligand contact to substrate.

The protein belongs to the RuBisCO large chain family. Type I subfamily. Heterohexadecamer of 8 large chains and 8 small chains; disulfide-linked. The disulfide link is formed within the large subunit homodimers. Mg(2+) serves as cofactor. In terms of processing, the disulfide bond which can form in the large chain dimeric partners within the hexadecamer appears to be associated with oxidative stress and protein turnover.

The protein localises to the plastid. Its subcellular location is the chloroplast. The enzyme catalyses 2 (2R)-3-phosphoglycerate + 2 H(+) = D-ribulose 1,5-bisphosphate + CO2 + H2O. It carries out the reaction D-ribulose 1,5-bisphosphate + O2 = 2-phosphoglycolate + (2R)-3-phosphoglycerate + 2 H(+). Functionally, ruBisCO catalyzes two reactions: the carboxylation of D-ribulose 1,5-bisphosphate, the primary event in carbon dioxide fixation, as well as the oxidative fragmentation of the pentose substrate in the photorespiration process. Both reactions occur simultaneously and in competition at the same active site. This Brassica oleracea (Wild cabbage) protein is Ribulose bisphosphate carboxylase large chain.